A 344-amino-acid chain; its full sequence is DNA-directed RNA polymerase subunit alpha (344 aa).

The tract at residues 1 to 238 is alpha N-terminal domain (alpha-NTD); it reads MKVIKTAPLI…KQLGVFGERP (238 aa). Positions 254–344 are alpha C-terminal domain (alpha-CTD); that stretch reads AKDLSAKIES…EKLEDKGGND (91 aa).

This sequence belongs to the RNA polymerase alpha chain family. In terms of assembly, homodimer. The RNAP catalytic core consists of 2 alpha, 1 beta, 1 beta' and 1 omega subunit. When a sigma factor is associated with the core the holoenzyme is formed, which can initiate transcription.

It catalyses the reaction RNA(n) + a ribonucleoside 5'-triphosphate = RNA(n+1) + diphosphate. Its function is as follows. DNA-dependent RNA polymerase catalyzes the transcription of DNA into RNA using the four ribonucleoside triphosphates as substrates. In Helicobacter pylori (strain ATCC 700392 / 26695) (Campylobacter pylori), this protein is DNA-directed RNA polymerase subunit alpha.